We begin with the raw amino-acid sequence, 265 residues long: Cytochrome c oxidase subunit 3 (265 aa).

A run of 6 helical transmembrane segments spans residues 16–36 (PWPFFVAISANGMAVGLILWL), 40–60 (PSFLLMGMSLVCMLLSTFSWW), 83–103 (CVALFILSEVMFFFTFFWTFF), 159–179 (VGPFIGLVVTIVCGTVFFLVQ), 198–218 (VFYLLTGFHGMHVVVGTIWLM), and 241–261 (IWYWHFVDVVWVALWCLVYVW).

The protein belongs to the cytochrome c oxidase subunit 3 family. In terms of assembly, component of the cytochrome c oxidase (complex IV, CIV), a multisubunit enzyme composed of a catalytic core of 3 subunits and several supernumerary subunits. The complex exists as a monomer or a dimer and forms supercomplexes (SCs) in the inner mitochondrial membrane with ubiquinol-cytochrome c oxidoreductase (cytochrome b-c1 complex, complex III, CIII).

The protein localises to the mitochondrion inner membrane. It catalyses the reaction 4 Fe(II)-[cytochrome c] + O2 + 8 H(+)(in) = 4 Fe(III)-[cytochrome c] + 2 H2O + 4 H(+)(out). Functionally, component of the cytochrome c oxidase, the last enzyme in the mitochondrial electron transport chain which drives oxidative phosphorylation. The respiratory chain contains 3 multisubunit complexes succinate dehydrogenase (complex II, CII), ubiquinol-cytochrome c oxidoreductase (cytochrome b-c1 complex, complex III, CIII) and cytochrome c oxidase (complex IV, CIV), that cooperate to transfer electrons derived from NADH and succinate to molecular oxygen, creating an electrochemical gradient over the inner membrane that drives transmembrane transport and the ATP synthase. Cytochrome c oxidase is the component of the respiratory chain that catalyzes the reduction of oxygen to water. Electrons originating from reduced cytochrome c in the intermembrane space (IMS) are transferred via the dinuclear copper A center (CU(A)) of subunit 2 and heme A of subunit 1 to the active site in subunit 1, a binuclear center (BNC) formed by heme A3 and copper B (CU(B)). The BNC reduces molecular oxygen to 2 water molecules using 4 electrons from cytochrome c in the IMS and 4 protons from the mitochondrial matrix. The protein is Cytochrome c oxidase subunit 3 (COIII) of Mytilus edulis (Blue mussel).